A 231-amino-acid polypeptide reads, in one-letter code: tRNA (guanine-N(1)-)-methyltransferase (231 aa).

S-adenosyl-L-methionine is bound by residues Gly109 and 133-138 (IGDYVL).

This sequence belongs to the RNA methyltransferase TrmD family. In terms of assembly, homodimer.

It localises to the cytoplasm. It catalyses the reaction guanosine(37) in tRNA + S-adenosyl-L-methionine = N(1)-methylguanosine(37) in tRNA + S-adenosyl-L-homocysteine + H(+). Its function is as follows. Specifically methylates guanosine-37 in various tRNAs. The chain is tRNA (guanine-N(1)-)-methyltransferase from Nocardia farcinica (strain IFM 10152).